Here is a 179-residue protein sequence, read N- to C-terminus: MARLQEFYKEKVVGDLTAKFAYKSVMEVPRILKITLNMGLSEAVADKKIIEHAVGDLTKIAGQKPVVTKARKAIAGFKIREGYPIGCMVTLRGAHMYEFLDRFITVALPRVRDFRGVSGKAFDGRGNYNIGVKEQIIFPEIEYDKIDALRGMNISITTTAKTDDEAKALLAAFKFPFRN.

The protein belongs to the universal ribosomal protein uL5 family. Part of the 50S ribosomal subunit; part of the 5S rRNA/L5/L18/L25 subcomplex. Contacts the 5S rRNA and the P site tRNA. Forms a bridge to the 30S subunit in the 70S ribosome.

Its function is as follows. This is one of the proteins that bind and probably mediate the attachment of the 5S RNA into the large ribosomal subunit, where it forms part of the central protuberance. In the 70S ribosome it contacts protein S13 of the 30S subunit (bridge B1b), connecting the 2 subunits; this bridge is implicated in subunit movement. Contacts the P site tRNA; the 5S rRNA and some of its associated proteins might help stabilize positioning of ribosome-bound tRNAs. The polypeptide is Large ribosomal subunit protein uL5 (Janthinobacterium sp. (strain Marseille) (Minibacterium massiliensis)).